The following is a 198-amino-acid chain: HTH-type transcriptional regulator BetI (198 aa).

The HTH tetR-type domain occupies 8 to 68 (PIRRQQLIDA…ATMRYLISHL (61 aa)). A DNA-binding region (H-T-H motif) is located at residues 31-50 (TIAQIARRAGVSNGIISHYF).

It functions in the pathway amine and polyamine biosynthesis; betaine biosynthesis via choline pathway [regulation]. Its function is as follows. Repressor involved in the biosynthesis of the osmoprotectant glycine betaine. It represses transcription of the choline transporter BetT and the genes of BetAB involved in the synthesis of glycine betaine. In Serratia proteamaculans (strain 568), this protein is HTH-type transcriptional regulator BetI.